The primary structure comprises 1114 residues: Hephaestin-like protein (1114 aa).

A signal peptide spans 1 to 26 (MMDRSNAAFVLTACFIFSQLICHVAA). Plastocyanin-like domains lie at 27-210 (ITRT…LICR), 218-365 (QQSG…VTKC), 380-562 (KRTY…LLTC), 572-719 (TRKD…VNTC), 730-915 (KTRD…LIIC), and 924-1114 (TEER…LLKA). At 27–1091 (ITRTYYIAAV…KTTPKPITAA (1065 aa)) the chain is on the extracellular side. N-linked (GlcNAc...) asparagine glycosylation occurs at N121. Positions 129, 131, 189, and 191 each coordinate Cu cation. C183 and C209 are joined by a disulfide. N236 is a glycosylation site (N-linked (GlcNAc...) asparagine). An intrachain disulfide couples C284 to C365. Positions 303, 346, and 351 each coordinate Cu cation. N361, N478, and N489 each carry an N-linked (GlcNAc...) asparagine glycan. Intrachain disulfides connect C536–C562 and C638–C719. Residues H657, C700, H705, and M710 each coordinate Cu cation. An N-linked (GlcNAc...) asparagine glycan is attached at N831. Cysteines 889 and 915 form a disulfide. The N-linked (GlcNAc...) asparagine glycan is linked to N944. H1014, H1017, H1019, H1059, C1060, H1061, H1065, and M1070 together coordinate Cu cation. The helical transmembrane segment at 1092–1112 (SSFVTSSIFIYLSFPVLAMLL) threads the bilayer. Topologically, residues 1113 to 1114 (KA) are cytoplasmic.

This sequence belongs to the multicopper oxidase family. Cu cation serves as cofactor. As to expression, component of the acid-insoluble and acid-soluble organic matrix of the aragonitic skeleton (at protein level).

It is found in the membrane. In terms of biological role, may function as a ferroxidase and may be involved in copper transport and homeostasis. The polypeptide is Hephaestin-like protein (Acropora millepora (Staghorn coral)).